A 703-amino-acid polypeptide reads, in one-letter code: Lethal(3)malignant brain tumor-like protein 2 (703 aa).

The interval methionine 1 to histidine 70 is disordered. At serine 13 the chain carries Phosphoserine. The segment covering proline 15–glutamate 25 has biased composition (acidic residues). Low complexity predominate over residues serine 35–glutamate 49. Residues glutamate 50–glutamate 60 are compositionally biased toward acidic residues. A Phosphoserine modification is found at serine 67. The segment at aspartate 81 to arginine 116 adopts an FCS-type zinc-finger fold. Residues cysteine 90, cysteine 93, cysteine 110, and cysteine 114 each contribute to the Zn(2+) site. MBT repeat units follow at residues phenylalanine 179–proline 283, threonine 291–serine 391, methionine 397–proline 500, and phenylalanine 508–proline 604. Serine 338 bears the Phosphoserine mark. Lysine 405 is covalently cross-linked (Glycyl lysine isopeptide (Lys-Gly) (interchain with G-Cter in SUMO2)). 2 disordered regions span residues proline 604–leucine 649 and valine 672–serine 703. Residues threonine 619 to proline 634 show a composition bias toward basic residues. Glycyl lysine isopeptide (Lys-Gly) (interchain with G-Cter in SUMO2) cross-links involve residues lysine 647 and lysine 673. Phosphoserine is present on residues serine 681, serine 685, and serine 687. Lysine 698 participates in a covalent cross-link: Glycyl lysine isopeptide (Lys-Gly) (interchain with G-Cter in SUMO1); alternate. Residue lysine 698 forms a Glycyl lysine isopeptide (Lys-Gly) (interchain with G-Cter in SUMO2); alternate linkage.

In terms of assembly, part of the E2F6.com-1 complex in G0 phase composed of E2F6, MGA, MAX, TFDP1, CBX3, BAT8, EUHMTASE1, RING1, RNF2, MBLR, BAT8 and YAF2.

Its subcellular location is the nucleus. Putative Polycomb group (PcG) protein. PcG proteins maintain the transcriptionally repressive state of genes, probably via a modification of chromatin, rendering it heritably changed in its expressibility. Its association with a chromatin-remodeling complex suggests that it may contribute to prevent expression of genes that trigger the cell into mitosis. Binds to monomethylated and dimethylated 'Lys-20' on histone H4. Binds histone H3 peptides that are monomethylated or dimethylated on 'Lys-4', 'Lys-9' or 'Lys-27'. The chain is Lethal(3)malignant brain tumor-like protein 2 (L3mbtl2) from Rattus norvegicus (Rat).